The primary structure comprises 770 residues: Low-density lipoprotein receptor-related protein 3 (770 aa).

A signal peptide spans 1–36; the sequence is MEKRAAAGPEGAPGARAPLAVVCLVNLFLTGRLSSA. The Extracellular segment spans residues 37–496; it reads VPALAACSGK…HGCLAAVPRK (460 aa). 9 cysteine pairs are disulfide-bonded: Cys-43–Cys-72, Cys-99–Cys-120, Cys-166–Cys-178, Cys-173–Cys-191, Cys-185–Cys-200, Cys-212–Cys-227, Cys-219–Cys-240, Cys-234–Cys-249, and Cys-254–Cys-282. A CUB 1 domain is found at 43 to 159; that stretch reads CSGKLEQHTE…QGFRLSYIRG (117 aa). N-linked (GlcNAc...) asparagine glycosylation occurs at Asn-71. 2 consecutive LDL-receptor class A domains span residues 165 to 201 and 211 to 250; these read SCQTDEFRCDNGKCLPGPWQCNMVDECGDGSDEGNCS and LCPGGTFPCSGARSTRCLPVERRCDGTQDCGDGSDEAGCP. N-linked (GlcNAc...) asparagine glycosylation occurs at Asn-199. The CUB 2 domain maps to 254–365; sequence CGRRLGSFYG…HGFNATYQVK (112 aa). An N-linked (GlcNAc...) asparagine glycan is attached at Asn-359. 2 LDL-receptor class A domains span residues 415–453 and 454–490; these read ACPPDQYPCEGGSGLCYAPADRCNNQKSCPDGADEKNCF and SCQPGTFHCGTNLCIFETWRCDGQEDCQDGSDEHGCL. Intrachain disulfides connect Cys-416–Cys-430, Cys-423–Cys-443, Cys-437–Cys-452, Cys-455–Cys-467, Cys-462–Cys-480, and Cys-474–Cys-489. A helical membrane pass occupies residues 497–517; it reads VITAALIGSLVCGLLLVIALG. The Cytoplasmic portion of the chain corresponds to 518–770; it reads CAFKLYSLRT…ASDDEALLVC (253 aa). Positions 639-753 are disordered; it reads LLQAAPGPVP…PLGVCRSPPP (115 aa). Residues 689-703 are compositionally biased toward basic and acidic residues; that stretch reads RDPEYRPEDKERKAC.

The protein belongs to the LDLR family. In terms of assembly, binds GGA1 and GGA2.

It is found in the membrane. It localises to the coated pit. Its function is as follows. Probable receptor, which may be involved in the internalization of lipophilic molecules and/or signal transduction. Its precise role is however unclear, since it does not bind to very low density lipoprotein (VLDL) or to LRPAP1 in vitro. This Rattus norvegicus (Rat) protein is Low-density lipoprotein receptor-related protein 3 (Lrp3).